The sequence spans 873 residues: Paramyosin (873 aa).

Residues 1–25 (MSSRSSKYMYKSSGGAGDISIEYGT) are nonhelical region. Residues 26 to 852 (DLGALTRLED…IRAKHRSWVT (827 aa)) are a coiled coil. Residues 853–873 (TSQVPGGTRQVFVTEESSQNF) are nonhelical region.

Belongs to the paramyosin family. In terms of assembly, homodimer. Binds IgG and collagen. In terms of tissue distribution, expressed in all tissues except in saliva.

The protein localises to the cytoplasm. Its subcellular location is the myofibril. Paramyosin is a major structural component of many thick filaments isolated from invertebrate muscles. This is Paramyosin (PRM) from Rhipicephalus microplus (Cattle tick).